Here is a 261-residue protein sequence, read N- to C-terminus: Probable membrane transporter protein ORF9 (261 aa).

A run of 8 helical transmembrane segments spans residues L8–G28, G29–G49, L78–V98, G100–L120, V133–G151, V152–F171, V189–M209, and I231–P251.

The protein belongs to the 4-toluene sulfonate uptake permease (TSUP) (TC 2.A.102) family.

The protein localises to the cell membrane. The polypeptide is Probable membrane transporter protein ORF9 (Sinorhizobium sp).